The chain runs to 192 residues: NAD(P)H-quinone oxidoreductase subunit J, organellar chromatophore (192 aa).

This sequence belongs to the complex I 30 kDa subunit family. In terms of assembly, NDH is composed of at least 16 different subunits, 5 of which are encoded in the nucleus.

It localises to the plastid. The protein resides in the organellar chromatophore thylakoid membrane. It catalyses the reaction a quinone + NADH + H(+) = a quinol + NAD(+). In terms of biological role, NDH-1 shuttles electrons from NADH, via FMN and iron-sulfur (Fe-S) centers, to quinones in the respiratory chain. Couples the redox reaction to proton translocation (for every two electrons transferred, four hydrogen ions are translocated across the cytoplasmic membrane), and thus conserves the redox energy in a proton gradient. The sequence is that of NAD(P)H-quinone oxidoreductase subunit J, organellar chromatophore from Paulinella chromatophora.